Consider the following 646-residue polypeptide: MSSKRASQYHQVEIPPPQPFLKSLKNTLNEILFADDPFRRIRNESKTSKKIELGLRHVFPILEWARGYSLEYLKSDVISGITIASLAIPQGISYAQLANLPPILGLYSSLVPPLVYAIMGSSRDLAVGTVAVASLLTAAMLGKEVNAVVNPKLYLHLAFTATFFAGLMQTCLGLLRLGFVVEILSHAAIVGFMGGAATVVCLQQLKGLLGLHHFTHSTDIVTVLRSIFSQSHMWRWESGVLGCCFLIFLLTTKYISKKRPKLFWISAMSPLVSVIFGTIFLYFLHDQFHGIQFIGELKKGINPPSITHLVFTPPYVMLALKVGIITGVIALAEGIAVGRSFAMYKNYNIDGNKEMIAFGMMNILGSFSSCYLTTGPFSRSAVNYNAGCKTALSNVVMAVAVAVTLLFLTPLFFYTPLVVLSSIIIAAMLGLVDYEAAIHLWKLDKFDFFVCLSAYLGVVFGTIEIGLILSVGISVMRLVLFVGRPKIYVMGNIQNSEIYRNIEHYPQAITRSSLLILHIDGPIYFANSTYLRDRIGRWIDEEEDKLRTSGDISLQYIVLDMSAVGNIDTSGISMLEELNKILGRRELKLVIANPGAEVMKKLSKSTFIESIGKERIYLTVAEAVAACDFMLHTAKPDSPVPEFNNV.

The Cytoplasmic segment spans residues 1-76 (MSSKRASQYH…GYSLEYLKSD (76 aa)). The helical transmembrane segment at 77–97 (VISGITIASLAIPQGISYAQL) threads the bilayer. Over 98 to 99 (AN) the chain is Extracellular. The chain crosses the membrane as a helical span at residues 100–120 (LPPILGLYSSLVPPLVYAIMG). Residues 121-124 (SSRD) are Cytoplasmic-facing. A helical membrane pass occupies residues 125–145 (LAVGTVAVASLLTAAMLGKEV). Topologically, residues 146–154 (NAVVNPKLY) are extracellular. A helical membrane pass occupies residues 155–175 (LHLAFTATFFAGLMQTCLGLL). A topological domain (cytoplasmic) is located at residue Arg-176. A helical membrane pass occupies residues 177 to 197 (LGFVVEILSHAAIVGFMGGAA). Residues 198 to 235 (TVVCLQQLKGLLGLHHFTHSTDIVTVLRSIFSQSHMWR) are Extracellular-facing. Residues 236-256 (WESGVLGCCFLIFLLTTKYIS) traverse the membrane as a helical segment. At 257-262 (KKRPKL) the chain is on the cytoplasmic side. A helical transmembrane segment spans residues 263–283 (FWISAMSPLVSVIFGTIFLYF). Residues 284–315 (LHDQFHGIQFIGELKKGINPPSITHLVFTPPY) are Extracellular-facing. A helical membrane pass occupies residues 316 to 336 (VMLALKVGIITGVIALAEGIA). Topologically, residues 337–354 (VGRSFAMYKNYNIDGNKE) are cytoplasmic. A helical membrane pass occupies residues 355-375 (MIAFGMMNILGSFSSCYLTTG). The Extracellular portion of the chain corresponds to 376–390 (PFSRSAVNYNAGCKT). 2 helical membrane-spanning segments follow: residues 391-411 (ALSN…LTPL) and 412-432 (FFYT…LGLV). Residues 433-447 (DYEAAIHLWKLDKFD) are Extracellular-facing. The chain crosses the membrane as a helical span at residues 448–468 (FFVCLSAYLGVVFGTIEIGLI). The Cytoplasmic portion of the chain corresponds to 469–646 (LSVGISVMRL…DSPVPEFNNV (178 aa)). Residues 504–627 (HYPQAITRSS…LTVAEAVAAC (124 aa)) form the STAS domain.

The protein belongs to the SLC26A/SulP transporter (TC 2.A.53) family. Expressed only in leaves.

It localises to the membrane. H(+)/sulfate cotransporter that may play a role in the regulation of sulfate assimilation. The chain is Sulfate transporter 3.2 (SULTR3;2) from Arabidopsis thaliana (Mouse-ear cress).